The chain runs to 244 residues: Anti-H(O) lectin 1 (244 aa).

Asparagine 113 and asparagine 117 each carry an N-linked (GlcNAc...) asparagine glycan. Mn(2+) contacts are provided by glutamate 127 and aspartate 129. Ca(2+) is bound by residues aspartate 129, tyrosine 131, asparagine 137, and aspartate 142. 2 residues coordinate Mn(2+): aspartate 142 and histidine 145.

The protein belongs to the leguminous lectin family. In terms of assembly, homotetramer.

Functionally, di-N-acetylchitobiose-binding anti-H(O) lectin. This is Anti-H(O) lectin 1 from Cytisophyllum sessilifolium (Sessile-leaved cytisus).